The primary structure comprises 132 residues: UPF0299 membrane protein YohJ (132 aa).

Over methionine 1–asparagine 6 the chain is Periplasmic. The helical transmembrane segment at isoleucine 7 to phenylalanine 27 threads the bilayer. At isoleucine 28–serine 30 the chain is on the cytoplasmic side. A helical membrane pass occupies residues leucine 31–alanine 51. Over leucine 52–proline 62 the chain is Periplasmic. The helical transmembrane segment at glycine 63–methionine 83 threads the bilayer. Topologically, residues glutamine 84–glutamine 92 are cytoplasmic. Residues phenylalanine 93–tryptophan 113 form a helical membrane-spanning segment. The Periplasmic segment spans residues serine 114–glutamate 132.

This sequence belongs to the UPF0299 family.

The protein resides in the cell inner membrane. This Escherichia coli O157:H7 protein is UPF0299 membrane protein YohJ (yohJ).